A 249-amino-acid chain; its full sequence is MSDSVVAVSASPVTPQTASAEKKVAAKKPASASASKAKKTTAPPTHPPTQQMVDASIQNLKERGGSSLLAIKKYISATYKCDAQKLAPFIKKYLKNSVANGKLIQTKGKGASGSFKLSASSKKEPKPKVSSVEKKSKKVTSSAAAAKKKTISATKKPKGVADKKLSKAVVTKKSVDKKKAEKAKAKDAKKVGTIKAKPTTAKAKSSAAKPKTPKPKTTSAKPKKVVAAASPKKAAAKKPKAKTASATKK.

Low complexity-rich tracts occupy residues 1–19 (MSDS…QTAS) and 27–43 (KKPA…TTAP). Disordered stretches follow at residues 1 to 53 (MSDS…QQMV) and 105 to 249 (QTKG…ATKK). The region spanning 45 to 119 (THPPTQQMVD…GASGSFKLSA (75 aa)) is the H15 domain. The segment covering 121-134 (SKKEPKPKVSSVEK) has biased composition (basic and acidic residues). A compositionally biased stretch (basic residues) spans 146–158 (AKKKTISATKKPK). Positions 173–190 (KSVDKKKAEKAKAKDAKK) are enriched in basic and acidic residues. The span at 195-233 (KAKPTTAKAKSSAAKPKTPKPKTTSAKPKKVVAAASPKK) shows a compositional bias: low complexity. Basic residues predominate over residues 234–249 (AAAKKPKAKTASATKK).

Belongs to the histone H1/H5 family.

Its subcellular location is the nucleus. It localises to the chromosome. Functionally, histones H1 are necessary for the condensation of nucleosome chains into higher-order structures. The chain is Histone H1 (His1) from Drosophila hydei (Fruit fly).